The primary structure comprises 412 residues: MPLEEILSRLPLKSTRAVRSTCKKWDSLFKNRSFISKAAAAREGESQMVVLMDHNLHLVSFFFGSDTSVEIKGKRICLNDDSDSEQVKISQVFHCEGLLLCILKDDNFSLVVWNPYWGQTRWIKPRCSFEIPQGCDMYRYAIGYDNKRRNHKILRFIDYEFHYPRDNVVLWYEIYDFESDLWTTLDVTTPHWLINCGNRGVTLKGNTYWCAKKRNSDLFLNADHIICFDFTSERFGPLLLLPFSDLDGVVTLACVREEKLAALVCHEDVVEVWITIKIEANEVLWSKFLTVNVDLGDEIPSSLTYGSFFIDEEKKVAMIFDKTLDRGDTVHIMGEAGYGGQVDLGEPVNKRRCPLVCSYVPSLVQIKKPAGFQRKQQSKLEKRQYVRNISKLRALKTQSSWTLSMSLECHQQ.

The F-box domain occupies 1 to 38 (MPLEEILSRLPLKSTRAVRSTCKKWDSLFKNRSFISKA).

This is Putative F-box protein At3g22940 from Arabidopsis thaliana (Mouse-ear cress).